The following is a 442-amino-acid chain: D-serine dehydratase (442 aa).

N6-(pyridoxal phosphate)lysine is present on K118.

It belongs to the serine/threonine dehydratase family. DsdA subfamily. Monomer. Pyridoxal 5'-phosphate serves as cofactor.

It carries out the reaction D-serine = pyruvate + NH4(+). In Escherichia coli (strain 55989 / EAEC), this protein is D-serine dehydratase.